The sequence spans 317 residues: Transaldolase (317 aa).

The active-site Schiff-base intermediate with substrate is K132.

This sequence belongs to the transaldolase family. Type 1 subfamily. In terms of assembly, homodimer.

It localises to the cytoplasm. The enzyme catalyses D-sedoheptulose 7-phosphate + D-glyceraldehyde 3-phosphate = D-erythrose 4-phosphate + beta-D-fructose 6-phosphate. It participates in carbohydrate degradation; pentose phosphate pathway; D-glyceraldehyde 3-phosphate and beta-D-fructose 6-phosphate from D-ribose 5-phosphate and D-xylulose 5-phosphate (non-oxidative stage): step 2/3. Its function is as follows. Transaldolase is important for the balance of metabolites in the pentose-phosphate pathway. The chain is Transaldolase from Shigella dysenteriae serotype 1 (strain Sd197).